The chain runs to 207 residues: Large ribosomal subunit protein uL4 (207 aa).

The segment at 45-80 is disordered; that stretch reads RQGTHAVKNRSEVRGGGRKPWRQKGTGRARQGSTRS. Residues 60-71 are compositionally biased toward basic residues; that stretch reads GGRKPWRQKGTG.

It belongs to the universal ribosomal protein uL4 family. As to quaternary structure, part of the 50S ribosomal subunit.

Its function is as follows. One of the primary rRNA binding proteins, this protein initially binds near the 5'-end of the 23S rRNA. It is important during the early stages of 50S assembly. It makes multiple contacts with different domains of the 23S rRNA in the assembled 50S subunit and ribosome. Forms part of the polypeptide exit tunnel. The sequence is that of Large ribosomal subunit protein uL4 from Oceanobacillus iheyensis (strain DSM 14371 / CIP 107618 / JCM 11309 / KCTC 3954 / HTE831).